The following is a 267-amino-acid chain: MSVVSLPQLLEAGVHFGHKASRWNPKMRPYIFAERNGIHIIDLVQTARYLNEAYEYVREGAEKGWRFLFVGTKRQAAGIIAHEATRCGSYYVNQRWLGGMLTNWATIKTRIDRLKEIEEMQSSGLLDRLPKQEAARLKRELAKLEKYLGGIKTMRKLPDAVIIVDQRREANAVQECIKLKIPIISLLDTNCDPDLSDVFIPSNDDAIRAIKLIVGKLADAIYEGRHGQLDTVEEDEYDYEGAMDMDLEDDILEDVEDEEEGDPEQGE.

A disordered region spans residues 247–267 (LEDDILEDVEDEEEGDPEQGE).

The protein belongs to the universal ribosomal protein uS2 family.

The protein is Small ribosomal subunit protein uS2 of Synechococcus sp. (strain JA-3-3Ab) (Cyanobacteria bacterium Yellowstone A-Prime).